The chain runs to 109 residues: Movement protein (109 aa).

The tract at residues 1–28 is disordered; it reads MDSFGRAPPLWPQSALPRVPGAAPSSSG. Residues 34–54 traverse the membrane as a helical segment; that stretch reads VGEIAIFTFVAVLALYLLWSW.

The protein belongs to the mastrevirus movement protein family. In terms of assembly, interacts with the capsid protein (CP). Part of a MP-CP-viral DNA complex.

The protein localises to the host membrane. Involved in the viral transport within, and between cells. The protein is Movement protein of Sugarcane streak virus (isolate South Africa) (SSV).